A 99-amino-acid polypeptide reads, in one-letter code: Aspartyl/glutamyl-tRNA(Asn/Gln) amidotransferase subunit C (99 aa).

Belongs to the GatC family. In terms of assembly, heterotrimer of A, B and C subunits.

The catalysed reaction is L-glutamyl-tRNA(Gln) + L-glutamine + ATP + H2O = L-glutaminyl-tRNA(Gln) + L-glutamate + ADP + phosphate + H(+). The enzyme catalyses L-aspartyl-tRNA(Asn) + L-glutamine + ATP + H2O = L-asparaginyl-tRNA(Asn) + L-glutamate + ADP + phosphate + 2 H(+). Allows the formation of correctly charged Asn-tRNA(Asn) or Gln-tRNA(Gln) through the transamidation of misacylated Asp-tRNA(Asn) or Glu-tRNA(Gln) in organisms which lack either or both of asparaginyl-tRNA or glutaminyl-tRNA synthetases. The reaction takes place in the presence of glutamine and ATP through an activated phospho-Asp-tRNA(Asn) or phospho-Glu-tRNA(Gln). The chain is Aspartyl/glutamyl-tRNA(Asn/Gln) amidotransferase subunit C from Corynebacterium efficiens (strain DSM 44549 / YS-314 / AJ 12310 / JCM 11189 / NBRC 100395).